The sequence spans 1032 residues: ATPase MORC2 (1032 aa).

Alanine 2 carries the post-translational modification N-acetylalanine. Residues asparagine 39, 87–89 (SAK), and 99–105 (QYGNGLK) contribute to the ATP site. Asparagine 39 provides a ligand contact to Mg(2+). Residues 282-362 (SRFKTRAEQE…KEAKQRALKE (81 aa)) are a coiled coil. Lysine 427 is an ATP binding site. Residues 490-544 (AMEIPTTIQCDLCLKWRTLPFQLSSVEKDYPDTWVCSMNPDPEQDRCEASEQKQK) form a CW-type zinc finger. Zn(2+)-binding residues include cysteine 499, cysteine 502, cysteine 525, and cysteine 536. 2 disordered regions span residues 530-563 (DPEQDRCEASEQKQKVPLGTFRKDMKTQEEKQKQ) and 577-793 (ALQK…RAQK). Basic and acidic residues-rich tracts occupy residues 532-543 (EQDRCEASEQKQ) and 550-563 (FRKDMKTQEEKQKQ). Residues 547 to 584 (LGTFRKDMKTQEEKQKQLTEKIRQQQEKLEALQKTTPI) are a coiled coil. Threonine 582 is modified (phosphothreonine). Phosphoserine is present on residues serine 602 and serine 615. Positions 627–638 (SRPPSLPTPRPA) are enriched in pro residues. A Glycyl lysine isopeptide (Lys-Gly) (interchain with G-Cter in SUMO2) cross-link involves residue lysine 652. A compositionally biased stretch (low complexity) spans 690–704 (PLVQQLSPSLLPNSK). Serine 696 is subject to Phosphoserine. Lysine 704 participates in a covalent cross-link: Glycyl lysine isopeptide (Lys-Gly) (interchain with G-Cter in SUMO2). Serine 705 carries the phosphoserine modification. Residues 711-720 (SPKVIKTPVV) are compositionally biased toward low complexity. Lysine 716 is covalently cross-linked (Glycyl lysine isopeptide (Lys-Gly) (interchain with G-Cter in SUMO2)). Residues serine 725 and serine 730 each carry the phosphoserine modification. Threonine 733 is modified (phosphothreonine). Serine 739 carries the post-translational modification Phosphoserine; by PAK1. Positions 741–761 (AVSDEEEVEEEAERRKERCKR) form a coiled coil. Residue serine 743 is modified to Phosphoserine. Positions 765 to 774 (VVKEEKKDSN) are enriched in basic and acidic residues. A Glycyl lysine isopeptide (Lys-Gly) (interchain with G-Cter in SUMO2) cross-link involves residue lysine 767. A phosphoserine mark is found at serine 777 and serine 779. Lysine 819 is covalently cross-linked (Glycyl lysine isopeptide (Lys-Gly) (interchain with G-Cter in SUMO2)). A disordered region spans residues 850–870 (RLMKPPSPEHQSLDTQQEGGE). A Glycyl lysine isopeptide (Lys-Gly) (interchain with G-Cter in SUMO2) cross-link involves residue lysine 932. Positions 966–1016 (QSRADSRAKASEESLRTSERKLRETEEKLQKLRTNIVALLQKVQEDIDINT) form a coiled coil.

Homodimerizes upon ATP-binding and dissociate upon ATP hydrolysis; homodimerization is required for gene silencing. Interacts with HDAC4. Interacts with ACLY. Interacts with TASOR and MPHOSPH8; the interactions associate MORC2 with the HUSH complex which recruits MORC2 to heterochromatic loci. In terms of processing, phosphorylated by PAK1 at Ser-739 upon DNA damage. Phosphorylation is required for ATPase activity and recruitment to damaged chromatin. Highly expressed in smooth muscle, pancreas and testis.

It localises to the nucleus. The protein resides in the cytoplasm. The protein localises to the cytosol. Its subcellular location is the chromosome. It is found in the nucleus matrix. It carries out the reaction ATP + H2O = ADP + phosphate + H(+). Its activity is regulated as follows. ATPase activity is dependent of phosphorylation by PAK1 and presence of DNA. Essential for epigenetic silencing by the HUSH (human silencing hub) complex. Recruited by HUSH to target site in heterochromatin, the ATPase activity and homodimerization are critical for HUSH-mediated silencing. Represses germ cell-related genes and L1 retrotransposons in collaboration with SETDB1 and the HUSH complex, the silencing is dependent of repressive epigenetic modifications, such as H3K9me3 mark. Silencing events often occur within introns of transcriptionally active genes, and lead to the down-regulation of host gene expression. During DNA damage response, regulates chromatin remodeling through ATP hydrolysis. Upon DNA damage, is phosphorylated by PAK1, both colocalize to chromatin and induce H2AX expression. ATPase activity is required and dependent of phosphorylation by PAK1 and presence of DNA. Recruits histone deacetylases, such as HDAC4, to promoter regions, causing local histone H3 deacetylation and transcriptional repression of genes such as CA9. Exhibits a cytosolic function in lipogenesis, adipogenic differentiation, and lipid homeostasis by increasing the activity of ACLY, possibly preventing its dephosphorylation. This is ATPase MORC2 from Homo sapiens (Human).